Here is an 835-residue protein sequence, read N- to C-terminus: Translation initiation factor IF-2 (835 aa).

The tract at residues 1-243 (MSDTDGKKTL…RARQKAMGGA (243 aa)) is disordered. Residues 43-67 (VPKPGAGKPSAGGSSPAGDPSRRPA) are compositionally biased toward low complexity. Composition is skewed to basic and acidic residues over residues 85-147 (KARE…EAKR), 157-166 (EAPKAERSAE), and 175-205 (EGGD…DGRR). The 169-residue stretch at 332–500 (PRPPVITIMG…AIALQAEILE (169 aa)) folds into the tr-type G domain. The tract at residues 341-348 (GHVDHGKT) is G1. 341-348 (GHVDHGKT) is a GTP binding site. Residues 366-370 (GITQH) are G2. The tract at residues 388 to 391 (DTPG) is G3. GTP is bound by residues 388-392 (DTPGH) and 442-445 (NKID). Residues 442–445 (NKID) form a G4 region. A G5 region spans residues 478–480 (SAK).

It belongs to the TRAFAC class translation factor GTPase superfamily. Classic translation factor GTPase family. IF-2 subfamily.

The protein resides in the cytoplasm. One of the essential components for the initiation of protein synthesis. Protects formylmethionyl-tRNA from spontaneous hydrolysis and promotes its binding to the 30S ribosomal subunits. Also involved in the hydrolysis of GTP during the formation of the 70S ribosomal complex. In Ruegeria pomeroyi (strain ATCC 700808 / DSM 15171 / DSS-3) (Silicibacter pomeroyi), this protein is Translation initiation factor IF-2.